Here is a 91-residue protein sequence, read N- to C-terminus: MADYNLVGVIKVMPTDPDVNLDELEEKLKAVIPEKFGLAKVEREPIAFGLVALKFYVLGRDEEGYSYDEVADLFRQVENVESAEVETVSRI.

This sequence belongs to the EF-1-beta/EF-1-delta family.

Its function is as follows. Promotes the exchange of GDP for GTP in EF-1-alpha/GDP, thus allowing the regeneration of EF-1-alpha/GTP that could then be used to form the ternary complex EF-1-alpha/GTP/AAtRNA. This is Elongation factor 1-beta from Thermococcus onnurineus (strain NA1).